Here is a 647-residue protein sequence, read N- to C-terminus: DNA mismatch repair protein MutL (647 aa).

Belongs to the DNA mismatch repair MutL/HexB family.

Its function is as follows. This protein is involved in the repair of mismatches in DNA. It is required for dam-dependent methyl-directed DNA mismatch repair. May act as a 'molecular matchmaker', a protein that promotes the formation of a stable complex between two or more DNA-binding proteins in an ATP-dependent manner without itself being part of a final effector complex. This is DNA mismatch repair protein MutL from Bacillus cereus (strain G9842).